The primary structure comprises 210 residues: Glutathione S-transferase 2 (210 aa).

The GST N-terminal domain occupies 1 to 80 (MDFYYLPLSA…YLVEKYGKQN (80 aa)). Residues Ser-9, 50 to 52 (HTI), and 64 to 66 (ESR) each bind glutathione. The GST C-terminal domain occupies 87-208 (CPKKRALINQ…AGCLEMKKYF (122 aa)).

The protein belongs to the GST superfamily. Theta family. Homodimer.

The catalysed reaction is RX + glutathione = an S-substituted glutathione + a halide anion + H(+). In terms of biological role, conjugation of reduced glutathione to a wide number of exogenous and endogenous hydrophobic electrophiles. This chain is Glutathione S-transferase 2 (Gst2), found in Musca domestica (House fly).